Reading from the N-terminus, the 191-residue chain is Protein GrpE (191 aa).

Residues 1 to 14 (MEDQKQTPSNQTAT) are compositionally biased toward polar residues. Positions 1–35 (MEDQKQTPSNQTATPAGDEATSTAAASPETGAPDT) are disordered. A compositionally biased stretch (low complexity) spans 19–35 (EATSTAAASPETGAPDT).

This sequence belongs to the GrpE family. Homodimer.

The protein resides in the cytoplasm. Participates actively in the response to hyperosmotic and heat shock by preventing the aggregation of stress-denatured proteins, in association with DnaK and GrpE. It is the nucleotide exchange factor for DnaK and may function as a thermosensor. Unfolded proteins bind initially to DnaJ; upon interaction with the DnaJ-bound protein, DnaK hydrolyzes its bound ATP, resulting in the formation of a stable complex. GrpE releases ADP from DnaK; ATP binding to DnaK triggers the release of the substrate protein, thus completing the reaction cycle. Several rounds of ATP-dependent interactions between DnaJ, DnaK and GrpE are required for fully efficient folding. The sequence is that of Protein GrpE from Cupriavidus taiwanensis (strain DSM 17343 / BCRC 17206 / CCUG 44338 / CIP 107171 / LMG 19424 / R1) (Ralstonia taiwanensis (strain LMG 19424)).